The primary structure comprises 222 residues: Large ribosomal subunit protein uL4 (222 aa).

It belongs to the universal ribosomal protein uL4 family. As to quaternary structure, part of the 50S ribosomal subunit.

In terms of biological role, one of the primary rRNA binding proteins, this protein initially binds near the 5'-end of the 23S rRNA. It is important during the early stages of 50S assembly. It makes multiple contacts with different domains of the 23S rRNA in the assembled 50S subunit and ribosome. Its function is as follows. Forms part of the polypeptide exit tunnel. The chain is Large ribosomal subunit protein uL4 from Chlamydia trachomatis serovar L2 (strain ATCC VR-902B / DSM 19102 / 434/Bu).